The sequence spans 560 residues: DNA ligase B (560 aa).

The active-site N6-AMP-lysine intermediate is the lysine 124.

Belongs to the NAD-dependent DNA ligase family. LigB subfamily.

The enzyme catalyses NAD(+) + (deoxyribonucleotide)n-3'-hydroxyl + 5'-phospho-(deoxyribonucleotide)m = (deoxyribonucleotide)n+m + AMP + beta-nicotinamide D-nucleotide.. Its function is as follows. Catalyzes the formation of phosphodiester linkages between 5'-phosphoryl and 3'-hydroxyl groups in double-stranded DNA using NAD as a coenzyme and as the energy source for the reaction. This chain is DNA ligase B, found in Escherichia coli O9:H4 (strain HS).